Reading from the N-terminus, the 252-residue chain is Ditrans,polycis-undecaprenyl-diphosphate synthase ((2E,6E)-farnesyl-diphosphate specific) (252 aa).

The active site involves aspartate 24. Residue aspartate 24 coordinates Mg(2+). Substrate is bound by residues 25–28 (GNGR), tryptophan 29, arginine 37, histidine 41, and 69–71 (SSE). Catalysis depends on asparagine 72, which acts as the Proton acceptor. Residues tryptophan 73, arginine 75, and arginine 192 each coordinate substrate. Residue histidine 197 coordinates Mg(2+). Residue 198-200 (RIS) coordinates substrate. A Mg(2+)-binding site is contributed by glutamate 211.

The protein belongs to the UPP synthase family. Homodimer. It depends on Mg(2+) as a cofactor.

The enzyme catalyses 8 isopentenyl diphosphate + (2E,6E)-farnesyl diphosphate = di-trans,octa-cis-undecaprenyl diphosphate + 8 diphosphate. Functionally, catalyzes the sequential condensation of isopentenyl diphosphate (IPP) with (2E,6E)-farnesyl diphosphate (E,E-FPP) to yield (2Z,6Z,10Z,14Z,18Z,22Z,26Z,30Z,34E,38E)-undecaprenyl diphosphate (di-trans,octa-cis-UPP). UPP is the precursor of glycosyl carrier lipid in the biosynthesis of bacterial cell wall polysaccharide components such as peptidoglycan and lipopolysaccharide. This is Ditrans,polycis-undecaprenyl-diphosphate synthase ((2E,6E)-farnesyl-diphosphate specific) from Yersinia pestis.